The following is a 211-amino-acid chain: tRNA (guanine-N(7)-)-methyltransferase (211 aa).

Glu43, Glu68, Asp95, and Asp117 together coordinate S-adenosyl-L-methionine. Residue Asp117 is part of the active site. Residues Lys121, Asp153, and 190-193 (TEYE) each bind substrate.

It belongs to the class I-like SAM-binding methyltransferase superfamily. TrmB family.

The catalysed reaction is guanosine(46) in tRNA + S-adenosyl-L-methionine = N(7)-methylguanosine(46) in tRNA + S-adenosyl-L-homocysteine. It participates in tRNA modification; N(7)-methylguanine-tRNA biosynthesis. Functionally, catalyzes the formation of N(7)-methylguanine at position 46 (m7G46) in tRNA. The chain is tRNA (guanine-N(7)-)-methyltransferase from Staphylococcus saprophyticus subsp. saprophyticus (strain ATCC 15305 / DSM 20229 / NCIMB 8711 / NCTC 7292 / S-41).